An 83-amino-acid chain; its full sequence is Protein CASPARIAN STRIP INTEGRITY FACTOR 2 (83 aa).

Positions 1–28 are cleaved as a signal peptide; sequence MGLLPLVKKLGFIIFLLVSASAFALCSA. Residues 61-83 form a disordered region; the sequence is SRDYGHSSPKPKLVRPPFKLIPN. Position 64 is a sulfotyrosine (Y64). A hydroxyproline mark is found at P69 and P71.

As to quaternary structure, interacts with the specific receptor kinases GSO1 and GSO2. As to expression, expressed exclusively in the root stele.

Peptide hormone required for contiguous Casparian strip diffusion barrier formation in roots via the regulation of CASPs protein expression and distribution in a GSO1-GSO2 signaling pathway. The Casparian strip is required for ion homeostasis (e.g. iron and potassium ions). This Arabidopsis thaliana (Mouse-ear cress) protein is Protein CASPARIAN STRIP INTEGRITY FACTOR 2.